The primary structure comprises 401 residues: 4-hydroxy-3-methylbut-2-enyl diphosphate reductase (401 aa).

[4Fe-4S] cluster is bound at residue C66. A (2E)-4-hydroxy-3-methylbut-2-enyl diphosphate-binding site is contributed by H96. H96 contributes to the dimethylallyl diphosphate binding site. H96 lines the isopentenyl diphosphate pocket. [4Fe-4S] cluster is bound at residue C157. H185 provides a ligand contact to (2E)-4-hydroxy-3-methylbut-2-enyl diphosphate. H185 contributes to the dimethylallyl diphosphate binding site. Residue H185 participates in isopentenyl diphosphate binding. E187 acts as the Proton donor in catalysis. T250 lines the (2E)-4-hydroxy-3-methylbut-2-enyl diphosphate pocket. C288 lines the [4Fe-4S] cluster pocket. 4 residues coordinate (2E)-4-hydroxy-3-methylbut-2-enyl diphosphate: S317, S318, N319, and S381. Residues S317, S318, N319, and S381 each contribute to the dimethylallyl diphosphate site. Residues S317, S318, N319, and S381 each contribute to the isopentenyl diphosphate site.

The protein belongs to the IspH family. [4Fe-4S] cluster serves as cofactor.

The enzyme catalyses isopentenyl diphosphate + 2 oxidized [2Fe-2S]-[ferredoxin] + H2O = (2E)-4-hydroxy-3-methylbut-2-enyl diphosphate + 2 reduced [2Fe-2S]-[ferredoxin] + 2 H(+). It carries out the reaction dimethylallyl diphosphate + 2 oxidized [2Fe-2S]-[ferredoxin] + H2O = (2E)-4-hydroxy-3-methylbut-2-enyl diphosphate + 2 reduced [2Fe-2S]-[ferredoxin] + 2 H(+). It participates in isoprenoid biosynthesis; dimethylallyl diphosphate biosynthesis; dimethylallyl diphosphate from (2E)-4-hydroxy-3-methylbutenyl diphosphate: step 1/1. It functions in the pathway isoprenoid biosynthesis; isopentenyl diphosphate biosynthesis via DXP pathway; isopentenyl diphosphate from 1-deoxy-D-xylulose 5-phosphate: step 6/6. Catalyzes the conversion of 1-hydroxy-2-methyl-2-(E)-butenyl 4-diphosphate (HMBPP) into a mixture of isopentenyl diphosphate (IPP) and dimethylallyl diphosphate (DMAPP). Acts in the terminal step of the DOXP/MEP pathway for isoprenoid precursor biosynthesis. The protein is 4-hydroxy-3-methylbut-2-enyl diphosphate reductase of Prochlorococcus marinus (strain NATL1A).